Consider the following 320-residue polypeptide: Transcription factor bHLH34 (320 aa).

The region spanning 162–213 (SKPGTKACREKLRREKLNDKFMDLSSVLEPGRTPKTDKSAILDDAIRVVNQL) is the bHLH domain. Positions 299-320 (WSPLPPADRDTSRDLKNLPPVA) are disordered. Over residues 305-314 (ADRDTSRDLK) the composition is skewed to basic and acidic residues.

In terms of assembly, homodimer. Expressed constitutively in roots, leaves, stems, and flowers.

It localises to the nucleus. The polypeptide is Transcription factor bHLH34 (BHLH34) (Arabidopsis thaliana (Mouse-ear cress)).